The primary structure comprises 135 residues: ATP synthase epsilon chain (135 aa).

Belongs to the ATPase epsilon chain family. F-type ATPases have 2 components, CF(1) - the catalytic core - and CF(0) - the membrane proton channel. CF(1) has five subunits: alpha(3), beta(3), gamma(1), delta(1), epsilon(1). CF(0) has three main subunits: a, b and c.

The protein localises to the cell inner membrane. In terms of biological role, produces ATP from ADP in the presence of a proton gradient across the membrane. In Brucella suis (strain ATCC 23445 / NCTC 10510), this protein is ATP synthase epsilon chain.